A 61-amino-acid polypeptide reads, in one-letter code: Translational regulator CsrA (61 aa).

It belongs to the CsrA/RsmA family. Homodimer; the beta-strands of each monomer intercalate to form a hydrophobic core, while the alpha-helices form wings that extend away from the core.

The protein resides in the cytoplasm. Functionally, a key translational regulator that binds mRNA to regulate translation initiation and/or mRNA stability. Mediates global changes in gene expression, shifting from rapid growth to stress survival by linking envelope stress, the stringent response and the catabolite repression systems. Usually binds in the 5'-UTR; binding at or near the Shine-Dalgarno sequence prevents ribosome-binding, repressing translation, binding elsewhere in the 5'-UTR can activate translation and/or stabilize the mRNA. Its function is antagonized by small RNA(s). This chain is Translational regulator CsrA, found in Glaesserella parasuis serovar 5 (strain SH0165) (Haemophilus parasuis).